We begin with the raw amino-acid sequence, 154 residues long: Protein X (154 aa).

The mitochondrial targeting sequence stretch occupies residues 68 to 117; the sequence is PCALRFTSARRMETTVNAHWNLPKVLHKRTLGLSAMSTTDLEAYFKDCVF.

It belongs to the orthohepadnavirus protein X family. In terms of assembly, may form homodimer. May interact with host CEBPA, CFLAR, CREB1, DDB1, E4F1, HBXIP, HSPD1/HSP60, NFKBIA, POLR2E and SMAD4. Interacts with host SMC5-SMC6 complex and induces its degradation. Interacts with host TRPC4AP; leading to prevent ubiquitination of TRPC4AP. Interacts with host PLSCR1; this interaction promotes ubiquitination and degradation of HBx and impairs HBx-mediated cell proliferation. A fraction may be phosphorylated in insect cells and HepG2 cells, a human hepatoblastoma cell line. Phosphorylated in vitro by host protein kinase C or mitogen-activated protein kinase. N-acetylated in insect cells.

Its subcellular location is the host cytoplasm. It is found in the host nucleus. The protein resides in the host mitochondrion. Multifunctional protein that plays a role in silencing host antiviral defenses and promoting viral transcription. Does not seem to be essential for HBV infection. May be directly involved in development of cirrhosis and liver cancer (hepatocellular carcinoma). Most of cytosolic activities involve modulation of cytosolic calcium. The effect on apoptosis is controversial depending on the cell types in which the studies have been conducted. May induce apoptosis by localizing in mitochondria and causing loss of mitochondrial membrane potential. May also modulate apoptosis by binding host CFLAR, a key regulator of the death-inducing signaling complex (DISC). Promotes viral transcription by using the host E3 ubiquitin ligase DDB1 to target the SMC5-SMC6 complex to proteasomal degradation. This host complex would otherwise bind to viral episomal DNA, and prevents its transcription. Moderately stimulates transcription of many different viral and cellular transcription elements. Promoters and enhancers stimulated by HBx contain DNA binding sites for NF-kappa-B, AP-1, AP-2, c-EBP, ATF/CREB, or the calcium-activated factor NF-AT. This Hepatitis B virus genotype B2 (isolate Vietnam/9873/1997) (HBV-B) protein is Protein X.